Here is a 300-residue protein sequence, read N- to C-terminus: Dihydroorotate dehydrogenase B (NAD(+)), catalytic subunit (300 aa).

FMN is bound by residues S20 and 44-45 (KG). Substrate-binding positions include K44 and 68-72 (NAIGL). Residues N98 and N125 each contribute to the FMN site. A substrate-binding site is contributed by N125. Catalysis depends on C128, which acts as the Nucleophile. Residues K163 and I189 each coordinate FMN. 190–191 (NT) lines the substrate pocket. FMN-binding positions include G215, 241–242 (GG), and 263–264 (GT).

The protein belongs to the dihydroorotate dehydrogenase family. Type 1 subfamily. In terms of assembly, heterotetramer of 2 PyrK and 2 PyrD type B subunits. The cofactor is FMN.

The protein resides in the cytoplasm. The catalysed reaction is (S)-dihydroorotate + NAD(+) = orotate + NADH + H(+). The protein operates within pyrimidine metabolism; UMP biosynthesis via de novo pathway; orotate from (S)-dihydroorotate (NAD(+) route): step 1/1. In terms of biological role, catalyzes the conversion of dihydroorotate to orotate with NAD(+) as electron acceptor. This is Dihydroorotate dehydrogenase B (NAD(+)), catalytic subunit (pyrD) from Lachnoclostridium phytofermentans (strain ATCC 700394 / DSM 18823 / ISDg) (Clostridium phytofermentans).